The chain runs to 194 residues: tRNA (pseudouridine(54)-N(1))-methyltransferase (194 aa).

Leu-125 contributes to the S-adenosyl-L-methionine binding site.

Belongs to the methyltransferase superfamily. TrmY family. In terms of assembly, homodimer.

The protein resides in the cytoplasm. The catalysed reaction is pseudouridine(54) in tRNA + S-adenosyl-L-methionine = N(1)-methylpseudouridine(54) in tRNA + S-adenosyl-L-homocysteine + H(+). Its function is as follows. Specifically catalyzes the N1-methylation of pseudouridine at position 54 (Psi54) in tRNAs. This Methanospirillum hungatei JF-1 (strain ATCC 27890 / DSM 864 / NBRC 100397 / JF-1) protein is tRNA (pseudouridine(54)-N(1))-methyltransferase.